Reading from the N-terminus, the 243-residue chain is DNA repair protein RecO (243 aa).

Belongs to the RecO family.

Involved in DNA repair and RecF pathway recombination. This is DNA repair protein RecO from Azoarcus sp. (strain BH72).